Here is a 199-residue protein sequence, read N- to C-terminus: Recombination protein RecR (199 aa).

The segment at 58 to 73 adopts a C4-type zinc-finger fold; it reads CKICFNITDKEVCDIC. The Toprim domain maps to 81–176; it reads STICVVSHPM…KVTRIAHGIP (96 aa).

The protein belongs to the RecR family.

Its function is as follows. May play a role in DNA repair. It seems to be involved in an RecBC-independent recombinational process of DNA repair. It may act with RecF and RecO. This Caldanaerobacter subterraneus subsp. tengcongensis (strain DSM 15242 / JCM 11007 / NBRC 100824 / MB4) (Thermoanaerobacter tengcongensis) protein is Recombination protein RecR.